The chain runs to 400 residues: MLLTVLAVVGCFTAVNGHGYLTIPASRTRLGFETGIDTCPECSILEPVTAWPDLEAAQVGRSGPCGYNARVSVDYNQPSEYWGNEPVVTYTSGEVVEVQWCVDANGDHGGMFTYGICQNQTLVDKFLTPGYLPTNEEKQAAEDCFLDGELKCKDVSGQTCGYNPDCTEGAACWRNDWFTCNAFQANTARACQGVDGASLNSCKTTIAGGYTVTKRIKIPDYSSDHTLLRFRWNSFQTAQVYLHCADIAIAGSGGGTTSKSTTSTTSTTSTSRSTSTSAPTTTSSASTATPICTTQASLIPVTFQEFVTTMWGENVFVTGSISQLGSWSTDKAVALSATGYTASNPLWTTTIDLPAGTTFEYKFIKKETDGSIIWESDPNRSYTVPTGCSGTTATAAASWR.

The signal sequence occupies residues 1–17 (MLLTVLAVVGCFTAVNG). His18 contacts Cu(2+). Residue His18 is modified to Methylhistidine. In terms of domain architecture, Chitin-binding type-4 spans 18–247 (HGYLTIPASR…AQVYLHCADI (230 aa)). 7 disulfide bridges follow: Cys39-Cys42, Cys65-Cys244, Cys101-Cys202, Cys117-Cys144, Cys152-Cys160, Cys166-Cys172, and Cys180-Cys191. His108 is a binding site for Cu(2+). Asn119 carries an N-linked (GlcNAc...) asparagine glycan. A Cu(2+)-binding site is contributed by Tyr241. Residues 254 to 287 (GGTTSKSTTSTTSTTSTSRSTSTSAPTTTSSAST) form a disordered region. Over residues 257 to 287 (TSKSTTSTTSTTSTSRSTSTSAPTTTSSAST) the composition is skewed to low complexity. The CBM20 domain occupies 293–400 (TTQASLIPVT…TTATAAASWR (108 aa)). Residue Asn379 is glycosylated (N-linked (GlcNAc...) asparagine).

This sequence belongs to the polysaccharide monooxygenase AA13 family. Requires Cu(2+) as cofactor. O-mannosylated.

It localises to the secreted. It carries out the reaction starch + reduced acceptor + O2 = D-glucono-1,5-lactone-terminated malto-oligosaccharides + short-chain malto-oligosaccharides + acceptor + H2O.. With respect to regulation, activity is inhibited by both beta-cyclodextrin or amylose that block the access to the active site. Starch-active lytic polysaccharide monooxygenase that oxidizes the C1 position of starch substrates. Catalysis by LPMOs requires the reduction of the active-site copper from Cu(II) to Cu(I) by a reducing agent and H(2)O(2) or O(2) as a cosubstrate. The polypeptide is AA13 family lytic polysaccharide monooxygenase A (Aspergillus terreus (strain NIH 2624 / FGSC A1156)).